Reading from the N-terminus, the 95-residue chain is Acyl carrier protein AcpXL (95 aa).

In terms of domain architecture, Carrier spans 4–90 (TATFDKVADI…NLCAKIDELR (87 aa)). Ser-39 carries the O-(pantetheine 4'-phosphoryl)serine modification.

4'-phosphopantetheine is transferred from CoA to a specific serine of apo-ACP by AcpS. This modification is essential for activity because fatty acids are bound in thioester linkage to the sulfhydryl of the prosthetic group.

It localises to the cytoplasm. Its pathway is glycolipid biosynthesis; KDO(2)-lipid A biosynthesis. Functionally, carrier of the growing fatty acid chain in fatty acid biosynthesis. Is involved in the transfer of long hydroxylated fatty acids to lipid A. This is Acyl carrier protein AcpXL (acpXL) from Rhizobium meliloti (strain 1021) (Ensifer meliloti).